Here is a 586-residue protein sequence, read N- to C-terminus: Axin-like protein pry-1 (586 aa).

The segment at 1-135 (METHLGWARS…FIEAFNKMSS (135 aa)) is required for interaction with apr-1. The RGS domain maps to 10–131 (SLEAVLSDRS…GSEEFIEAFN (122 aa)). 3 disordered regions span residues 137–168 (TADQLPGGSAHHSSHQNTMRRSSGTTSRKSAA), 344–442 (MTDD…DSFA), and 478–501 (TSSLDYKDRRQHRKAPTPKKHSKI). 2 stretches are compositionally biased toward polar residues: residues 151-168 (HQNTMRRSSGTTSRKSAA) and 368-388 (GEGSKNTTLSPTNRAPAQLHN). Residues 421–442 (SQSMCAPSYSSASSSYSRDSFA) are compositionally biased toward low complexity. The segment covering 486–501 (RRQHRKAPTPKKHSKI) has biased composition (basic residues). The 82-residue stretch at 505 to 586 (LSNLITISYL…FEGRIAAELR (82 aa)) folds into the DIX domain.

Interacts (via N-terminus) with apr-1 (via C-terminus). Interacts with bar-1 (via ARM repeats), gsk-3, and mig-5. Expressed in hypodermal cells (seam cells) V5 and V6, Q neuroblasts, ventral hypodermal cells P7/8 to P11/12, body wall muscle cells and neurons in the head, the tail and the ventral nerve cord.

It is found in the cell membrane. The protein localises to the nucleus. The protein resides in the cytoplasm. It localises to the cell cortex. Functionally, works in parallel with axl-1 in negatively regulating bar-1 signaling in vulval precursor cells and Q neuroblasts. Inhibits Wnt signaling, which affects tissue specific expression of Hox genes, egl-5, lin-39 and mab-5. This in turn affects QR (postembryonic neuroblast) cell migration, vulval cell fate specification, and the development of sensory structures by the seam cell lineage. Has a role in alae V cell patterning, ray formation in the male tail and axon guidance. Does not affect B cell polarity. The sequence is that of Axin-like protein pry-1 from Caenorhabditis elegans.